The primary structure comprises 65 residues: Pancreatic polypeptide prohormone (65 aa).

Residue tyrosine 36 is modified to Tyrosine amide. The propeptide occupies 59-65 (ELSPMGA).

It belongs to the NPY family.

It localises to the secreted. Its function is as follows. Hormone secreted by pancreatic cells that acts as a regulator of pancreatic and gastrointestinal functions probably by signaling through the G protein-coupled receptor NPY4R2. This Sus scrofa (Pig) protein is Pancreatic polypeptide prohormone (PPY).